Consider the following 185-residue polypeptide: Elongation factor P (185 aa).

Belongs to the elongation factor P family.

The protein localises to the cytoplasm. Its pathway is protein biosynthesis; polypeptide chain elongation. Its function is as follows. Involved in peptide bond synthesis. Stimulates efficient translation and peptide-bond synthesis on native or reconstituted 70S ribosomes in vitro. Probably functions indirectly by altering the affinity of the ribosome for aminoacyl-tRNA, thus increasing their reactivity as acceptors for peptidyl transferase. This chain is Elongation factor P, found in Cyanothece sp. (strain PCC 7425 / ATCC 29141).